Here is a 234-residue protein sequence, read N- to C-terminus: MPKTAKKHREALAKIDRSRTYPLVEGIESVKSVAYAKFDETVEVAVRLGVDPRHADQMVRGAVVLPNGLGKDVRVLVFAKGEKEKEARDAGADHVGAEDLVAKIQEGWFDFDTAIATPDMMGVVGKIGKLLGPRGLMPNPKVGTVTFDVGRAVKESKAGKVEFRVEKAGIVHAPVGKASFDADKLKENLLALVEALVKAKPSAAKGTYIKKISLSSTMGPGLNLDIADVQSKLV.

Belongs to the universal ribosomal protein uL1 family. Part of the 50S ribosomal subunit.

In terms of biological role, binds directly to 23S rRNA. The L1 stalk is quite mobile in the ribosome, and is involved in E site tRNA release. Protein L1 is also a translational repressor protein, it controls the translation of the L11 operon by binding to its mRNA. This Geobacter metallireducens (strain ATCC 53774 / DSM 7210 / GS-15) protein is Large ribosomal subunit protein uL1.